The chain runs to 2378 residues: Serine/threonine-protein kinase ATM (2378 aa).

An FAT domain is found at 1415–1937 (LSARKRNTMM…LHTILMYDDE (523 aa)). One can recognise a PI3K/PI4K catalytic domain in the interval 2044-2366 (WKDVFTIADG…LLREATSADN (323 aa)). The segment at 2050-2056 (IADGIST) is G-loop. A catalytic loop region spans residues 2218 to 2226 (GLGDRHASN). Positions 2238–2263 (HIDLGMILEYSKRTLPVPEQVPFRIT) are activation loop. The 33-residue stretch at 2346-2378 (TAQSSNLQIRRLLREATSADNLSRMFCGWMPFL) folds into the FATC domain.

This sequence belongs to the PI3/PI4-kinase family. ATM subfamily.

It is found in the nucleus. It carries out the reaction L-seryl-[protein] + ATP = O-phospho-L-seryl-[protein] + ADP + H(+). The enzyme catalyses L-threonyl-[protein] + ATP = O-phospho-L-threonyl-[protein] + ADP + H(+). Serine/threonine protein kinase which activates checkpoint signaling in the presence of DNA double strand breaks (DSBs) and other forms of DNA damage induced by ionizing radiation and other genotoxic stresses such as UV. Plays a role in maintaining genome stability. This chain is Serine/threonine-protein kinase ATM (atm-1), found in Caenorhabditis elegans.